Reading from the N-terminus, the 322-residue chain is MARSRLPATSLRKPWKLDRQKLPSPDSGHSLLCGWSPGGKARPAGNTGAWAPAEQFFPASNRTREGGGLWPPLPLQSSPAAPTMLDSSAAEQVTRLTLKLLGQKLEQERQNVEGGPEGLHLEPGNEDRPDDALQTALKRRRDLLQRLREQHLLDELSRAQAWSGPSRGALGSALPPELPPTGILPTASPSPLAPDPPRIILPTVPQPPATIIQQLPQQPLIAQIPPPQAFPTQRSGSIKEDMVELLLLQNAQVHQLVLQNWMLKALPPALQDPPHVPPRVPRAARPRLPAVHHHHHHHHAVWPPGAATVLQPAPSLWTPGPP.

Disordered regions lie at residues 1–51 and 107–130; these read MARS…GAWA and QERQ…DRPD. A compositionally biased stretch (basic and acidic residues) spans 119-130; sequence LHLEPGNEDRPD.

Expressed in skin and fetal lung.

This is an uncharacterized protein from Homo sapiens (Human).